Consider the following 1059-residue polypeptide: Isoleucine--tRNA ligase (1059 aa).

The short motif at 47-57 is the 'HIGH' region element; that stretch reads PYTTGHIHLGT. The short motif at 591-595 is the 'KMSKS' region element; the sequence is KMSKS. Lys594 serves as a coordination point for ATP.

This sequence belongs to the class-I aminoacyl-tRNA synthetase family. IleS type 2 subfamily. Monomer. Requires Zn(2+) as cofactor.

It is found in the cytoplasm. The catalysed reaction is tRNA(Ile) + L-isoleucine + ATP = L-isoleucyl-tRNA(Ile) + AMP + diphosphate. In terms of biological role, catalyzes the attachment of isoleucine to tRNA(Ile). As IleRS can inadvertently accommodate and process structurally similar amino acids such as valine, to avoid such errors it has two additional distinct tRNA(Ile)-dependent editing activities. One activity is designated as 'pretransfer' editing and involves the hydrolysis of activated Val-AMP. The other activity is designated 'posttransfer' editing and involves deacylation of mischarged Val-tRNA(Ile). In Methanoculleus marisnigri (strain ATCC 35101 / DSM 1498 / JR1), this protein is Isoleucine--tRNA ligase.